Consider the following 69-residue polypeptide: Large ribosomal subunit protein bL31 (69 aa).

Cys-17, Cys-19, Cys-37, and Cys-40 together coordinate Zn(2+).

This sequence belongs to the bacterial ribosomal protein bL31 family. Type A subfamily. Part of the 50S ribosomal subunit. Requires Zn(2+) as cofactor.

Functionally, binds the 23S rRNA. This chain is Large ribosomal subunit protein bL31, found in Clostridium novyi (strain NT).